The chain runs to 266 residues: N-acetyltransferase ECO1 (266 aa).

The CCHH-type zinc finger occupies 31-55 (KKCTECQMSYIIDSPADCAEHKKYH). The N-acetyltransferase domain maps to 108 to 266 (TPGKTAEVKA…SGELLIPCYI (159 aa)).

This sequence belongs to the acetyltransferase family. ECO subfamily.

It is found in the nucleus. Its function is as follows. Probable acetyltransferase required for the establishment of sister chromatid cohesion and couple the processes of cohesion and DNA replication to ensure that only sister chromatids become paired together. In contrast to the structural cohesins, the deposition and establishment factors are required only during S phase. Acts by acetylating the cohesin complex component SMC3. In Eremothecium gossypii (strain ATCC 10895 / CBS 109.51 / FGSC 9923 / NRRL Y-1056) (Yeast), this protein is N-acetyltransferase ECO1 (ECO1).